The primary structure comprises 585 residues: Archaeosine synthase (585 aa).

The PUA domain occupies 516–584 (TKTVEIDGFV…IGVEIRHVEE (69 aa)).

This sequence belongs to the archaeosine synthase type 1 family. Homodimer.

It catalyses the reaction 7-cyano-7-carbaguanosine(15) in tRNA + L-glutamine + H2O = archaeosine(15) in tRNA + L-glutamate. It functions in the pathway tRNA modification; archaeosine-tRNA biosynthesis. In terms of biological role, is responsible for the final step in the biosynthesis of archaeosine, a modified nucleoside present in the dihydrouridine loop (D-loop) of archaeal tRNA. Catalyzes the conversion of 7-cyano-7-deazaguanine (preQ0)-modified tRNA to archaeosine-tRNA, transforming a nitrile group to a formamidine group. This chain is Archaeosine synthase, found in Haloferax volcanii (strain ATCC 29605 / DSM 3757 / JCM 8879 / NBRC 14742 / NCIMB 2012 / VKM B-1768 / DS2) (Halobacterium volcanii).